Here is a 64-residue protein sequence, read N- to C-terminus: MAQEQTKRGGGGGEDDDPTGSTAAGQERREKLTEETDDLLDEIDDVLEENAEDFVRAYVQKGGQ.

The disordered stretch occupies residues 1-38 (MAQEQTKRGGGGGEDDDPTGSTAAGQERREKLTEETDD). The tract at residues 21-58 (STAAGQERREKLTEETDDLLDEIDDVLEENAEDFVRAY) is ARC ATPase binding. The stretch at 23-52 (AAGQERREKLTEETDDLLDEIDDVLEENAE) forms a coiled coil. Gln64 is subject to Deamidated glutamine. An Isoglutamyl lysine isopeptide (Gln-Lys) (interchain with K-? in acceptor proteins) cross-link involves residue Gln64.

This sequence belongs to the prokaryotic ubiquitin-like protein family. Strongly interacts with the proteasome-associated ATPase ARC through a hydrophobic interface; the interacting region of Pup lies in its C-terminal half. There is one Pup binding site per ARC hexamer ring. Post-translationally, is modified by deamidation of its C-terminal glutamine to glutamate by the deamidase Dop, a prerequisite to the subsequent pupylation process.

It functions in the pathway protein degradation; proteasomal Pup-dependent pathway. Its function is as follows. Protein modifier that is covalently attached to lysine residues of substrate proteins, thereby targeting them for proteasomal degradation. The tagging system is termed pupylation. The sequence is that of Prokaryotic ubiquitin-like protein Pup from Mycolicibacterium gilvum (strain PYR-GCK) (Mycobacterium gilvum (strain PYR-GCK)).